We begin with the raw amino-acid sequence, 357 residues long: Phenylalanine--tRNA ligase alpha subunit (357 aa).

Glu257 serves as a coordination point for Mg(2+).

It belongs to the class-II aminoacyl-tRNA synthetase family. Phe-tRNA synthetase alpha subunit type 1 subfamily. In terms of assembly, tetramer of two alpha and two beta subunits. Mg(2+) is required as a cofactor.

The protein localises to the cytoplasm. The enzyme catalyses tRNA(Phe) + L-phenylalanine + ATP = L-phenylalanyl-tRNA(Phe) + AMP + diphosphate + H(+). The polypeptide is Phenylalanine--tRNA ligase alpha subunit (Roseobacter denitrificans (strain ATCC 33942 / OCh 114) (Erythrobacter sp. (strain OCh 114))).